Here is a 645-residue protein sequence, read N- to C-terminus: 1,4-alpha-glucan branching enzyme GlgB (645 aa).

Aspartate 309 acts as the Nucleophile in catalysis. Glutamate 352 acts as the Proton donor in catalysis. Positions 619 to 645 (VKTRKGSKKQDGSKTKVRSNVTSRGKR) are disordered. The span at 636–645 (RSNVTSRGKR) shows a compositional bias: polar residues.

It belongs to the glycosyl hydrolase 13 family. GlgB subfamily. Monomer.

It carries out the reaction Transfers a segment of a (1-&gt;4)-alpha-D-glucan chain to a primary hydroxy group in a similar glucan chain.. It functions in the pathway glycan biosynthesis; glycogen biosynthesis. Its function is as follows. Catalyzes the formation of the alpha-1,6-glucosidic linkages in glycogen by scission of a 1,4-alpha-linked oligosaccharide from growing alpha-1,4-glucan chains and the subsequent attachment of the oligosaccharide to the alpha-1,6 position. The sequence is that of 1,4-alpha-glucan branching enzyme GlgB from Bacillus cereus (strain Q1).